The chain runs to 583 residues: MASREDRDAANARVIQLQQQVERLEEEVASLRRRLAESPRGSRSLEERLAAAQATIAGLTSQNERLVATLKEARDQIVALREEVDRLAQPPSGYGIFLGRHEDGTVDVFTGGRKLRVTVSPSVDVDSLRKGQEVMLNEALNVVRAMSFERQGEVVMFKELLDGDRALVIAHADEERVVMLADSLADTPLRVGDSLLIEPRSGFAYERIPKAEVEELVLEEVPDVDYSKIGGLSAQIEQIRDAIELPYLYPELFKEHKLRPPKGVLLYGPPGCGKTLIAKAVANSLAKKVAEVTGKPEGKSFFLNIKGPELLNKYVGETERHIRLVFQRAREKASGGWPVIVFFDEMDSIFRTRGSGVSSDVENTIVPQLLSEIDGVEGLENVIVIGASNREDMIDPAILRPGRLDVKIKIERPDAEAARDIFSKYITPDLPLHPDDLAEHGGSREATVQAMIQHAVERMYAETEENRFLEVTYANGDKEVLYFKDFNSGAMIQNIVDRAKKMAIKDFLETGQKGLRIQHLMAACYDEFKENEDLPNTTNPDDWARISGKKGERIVYIRTLISGKQGTEAGRSIDTIANTGQYL.

Residues 2-90 (ASREDRDAAN…REEVDRLAQP (89 aa)) are a coiled coil. 271-276 (GCGKTL) contacts ATP. The docks into pockets in the proteasome alpha-ring stretch occupies residues 582–583 (YL).

This sequence belongs to the AAA ATPase family. In terms of assembly, homohexamer. Assembles into a hexameric ring structure that caps the 20S proteasome core. Strongly interacts with the prokaryotic ubiquitin-like protein Pup through a hydrophobic interface; the interacting region of ARC lies in its N-terminal coiled-coil domain. There is one Pup binding site per ARC hexamer ring. Upon ATP-binding, the C-terminus of ARC interacts with the alpha-rings of the proteasome core, possibly by binding to the intersubunit pockets.

It participates in protein degradation; proteasomal Pup-dependent pathway. Its function is as follows. ATPase which is responsible for recognizing, binding, unfolding and translocation of pupylated proteins into the bacterial 20S proteasome core particle. May be essential for opening the gate of the 20S proteasome via an interaction with its C-terminus, thereby allowing substrate entry and access to the site of proteolysis. Thus, the C-termini of the proteasomal ATPase may function like a 'key in a lock' to induce gate opening and therefore regulate proteolysis. In Acidothermus cellulolyticus (strain ATCC 43068 / DSM 8971 / 11B), this protein is Proteasome-associated ATPase.